Consider the following 448-residue polypeptide: Tubby-like F-box protein 3 (448 aa).

The F-box domain maps to 56–102; sequence ESRWASLPPELLREVIRRLEADESTWPSRRNVVCFAAVCRTWREMCK. Over residues 387-403 the composition is skewed to pro residues; it reads PSPPPAGAPTPSQPGPA. Positions 387–406 are disordered; the sequence is PSPPPAGAPTPSQPGPADPE.

Belongs to the TUB family. In terms of tissue distribution, expressed in roots, leaves, flowers and seeds.

In Oryza sativa subsp. japonica (Rice), this protein is Tubby-like F-box protein 3 (TULP3).